The chain runs to 211 residues: Ribonuclease MRP protein subunit rmp1 (211 aa).

A helical transmembrane segment spans residues 73-93; that stretch reads PALGLVLLGILARVWFVMGGI. Ser156 carries the phosphoserine modification. The tract at residues 178-211 is disordered; sequence SQGTKRKSKNSNSTVKKKKKRARKGRDEIDDIFG. Basic residues predominate over residues 181–201; it reads TKRKSKNSNSTVKKKKKRARK.

Component of RNase MRP complex which consists of an RNA moiety and at least 10 protein subunits.

It localises to the membrane. The protein localises to the nucleus. Its subcellular location is the nucleolus. Functionally, functions as part of ribonuclease MRP (RNase MRP), which is involved in rRNA processing in mitochondria. The polypeptide is Ribonuclease MRP protein subunit rmp1 (Schizosaccharomyces pombe (strain 972 / ATCC 24843) (Fission yeast)).